The following is a 140-amino-acid chain: MDNKMRLEFLAKSENEGFARVSVSAFIAQLDPTIEELTDIKTAVSEAVTNAIIHGYECDESKVVIIEASICEDEISITVEDNGIGIENLEEAREPLYTSKPELERSGMGFTVMETFMDSLEVYSEKDKGTKIIMKKKMNT.

The protein belongs to the anti-sigma-factor family.

The catalysed reaction is L-seryl-[protein] + ATP = O-phospho-L-seryl-[protein] + ADP + H(+). It catalyses the reaction L-threonyl-[protein] + ATP = O-phospho-L-threonyl-[protein] + ADP + H(+). Its function is as follows. Binds to sigma F and blocks its ability to form an RNA polymerase holoenzyme (E-sigma F). Phosphorylates SpoIIAA on a serine residue. This phosphorylation may enable SpoIIAA to act as an anti-anti-sigma factor that counteracts SpoIIAB and thus releases sigma F from inhibition. In Clostridium perfringens (strain ATCC 13124 / DSM 756 / JCM 1290 / NCIMB 6125 / NCTC 8237 / Type A), this protein is Anti-sigma F factor.